A 609-amino-acid polypeptide reads, in one-letter code: Hemagglutinin glycoprotein (609 aa).

Topologically, residues 1 to 34 (MSPPRDRVDAYYKDNFQFKNTRVVLNKEQLLIER) are intravirion. A helical; Signal-anchor for type II membrane protein membrane pass occupies residues 35–58 (PCMLLTVLFVMFLSLVGLLAIAGI). The Virion surface portion of the chain corresponds to 59–609 (RLHRAAVNTA…VGIKITCNGK (551 aa)). Residues Asn168, Asn187, Asn200, Asn215, and Asn395 are each glycosylated (N-linked (GlcNAc...) asparagine; by host).

The protein belongs to the paramyxoviruses hemagglutinin-neuraminidase family. Non-sialidase subfamily.

Its subcellular location is the virion membrane. The protein resides in the host membrane. In terms of biological role, attaches the virus to cell receptors and thereby initiating infection. Binding of H protein to the receptor induces a conformational change that allows the F protein to trigger virion/cell membranes fusion. Down-regulates human MCP/CD46 cell surface expression. The polypeptide is Hemagglutinin glycoprotein (H) (Rinderpest virus (strain Kabete O) (RDV)).